The chain runs to 24 residues: M-ectatotoxin-Eb2b (24 aa).

Expressed by the venom gland.

The protein resides in the secreted. Its function is as follows. Antimicrobial peptide active against Gram-negative bacterium E.coli MH1 (MIC=2.5 uM) and P.aeruginosa PAO1 (MIC=10 uM) and against Gram-positive bacterium A.globiformis VKM Ac-1112 (MIC=0.6 uM). The protein is M-ectatotoxin-Eb2b of Ectatomma brunneum (Ant).